The sequence spans 609 residues: UvrABC system protein C (609 aa).

The GIY-YIG domain occupies 16–94 (SSAGVYRMYD…IKQYMPKYNV (79 aa)). The UVR domain maps to 203–238 (QQVISALVDKMELAAERQAYEQAARFRDQIMALRKV).

This sequence belongs to the UvrC family. As to quaternary structure, interacts with UvrB in an incision complex.

The protein localises to the cytoplasm. In terms of biological role, the UvrABC repair system catalyzes the recognition and processing of DNA lesions. UvrC both incises the 5' and 3' sides of the lesion. The N-terminal half is responsible for the 3' incision and the C-terminal half is responsible for the 5' incision. This chain is UvrABC system protein C, found in Shewanella baltica (strain OS155 / ATCC BAA-1091).